We begin with the raw amino-acid sequence, 570 residues long: Molecular chaperone MKKS (570 aa).

192-199 (ERMVLGKS) contributes to the ATP binding site. Residues 198–370 (KSIIVPLKGQ…FHLLPNEATV (173 aa)) are substrate-binding apical domain.

Belongs to the TCP-1 chaperonin family. As to quaternary structure, component of a complex composed at least of MKKS, BBS10, BBS12, TCP1, CCT2, CCT3, CCT4, CCT5 and CCT8. Interacts with STUB1. Interacts with BBS2 (via coiled coil domain). Interacts with CCDC28B. Interacts with BBS12. Interacts with SMARCC1, a component of the SWI/SNF complexes; the interaction takes place predominantly in the cytoplasm and may modulate SMARCC1 location. Interacts with DLEC1. Widely expressed in adult and fetal tissues. Expressed in the developing heart, brain retina, limb buds, as well as in the developing neural tube. Expressed in the embryo in the first and second branchial arches. Expressed in parafin embedded tissue sections of brain, kidney, retina, olfactory epithelium and the ependymal layer of ventricles. Detected only in restricted regions of these tissue sections, including the ciliated border of renal tubules, the connecting cilium and the inner and outer nuclear layers of retina, and the ciliated layer of olfactory epithelia.

The protein localises to the cytoplasm. Its subcellular location is the cytoskeleton. The protein resides in the microtubule organizing center. It is found in the centrosome. It localises to the cytosol. The protein localises to the nucleus. Probable molecular chaperone that assists the folding of proteins upon ATP hydrolysis. Plays a role in the assembly of BBSome, a complex involved in ciliogenesis regulating transports vesicles to the cilia. May play a role in protein processing in limb, cardiac and reproductive system development. May play a role in cytokinesis. The protein is Molecular chaperone MKKS (Mkks) of Mus musculus (Mouse).